Consider the following 92-residue polypeptide: RNA-binding protein Hfq (92 aa).

One can recognise a Sm domain in the interval 9 to 68; the sequence is DPFLNALRRERVPVSVYLVNGIKLQGTIESFDQFVVLLRNTVSQMVYKHAISTVVPARNV.

Belongs to the Hfq family. Homohexamer.

In terms of biological role, RNA chaperone that binds small regulatory RNA (sRNAs) and mRNAs to facilitate mRNA translational regulation in response to envelope stress, environmental stress and changes in metabolite concentrations. Also binds with high specificity to tRNAs. The protein is RNA-binding protein Hfq of Xylella fastidiosa (strain M12).